Reading from the N-terminus, the 255-residue chain is Hydroxyacylglutathione hydrolase (255 aa).

7 residues coordinate Zn(2+): His56, His58, Asp60, His61, His114, Asp133, and His171.

The protein belongs to the metallo-beta-lactamase superfamily. Glyoxalase II family. As to quaternary structure, monomer. Requires Zn(2+) as cofactor.

It carries out the reaction an S-(2-hydroxyacyl)glutathione + H2O = a 2-hydroxy carboxylate + glutathione + H(+). Its pathway is secondary metabolite metabolism; methylglyoxal degradation; (R)-lactate from methylglyoxal: step 2/2. Functionally, thiolesterase that catalyzes the hydrolysis of S-D-lactoyl-glutathione to form glutathione and D-lactic acid. The protein is Hydroxyacylglutathione hydrolase of Rhodopseudomonas palustris (strain ATCC BAA-98 / CGA009).